Reading from the N-terminus, the 94-residue chain is Probable Fe(2+)-trafficking protein (94 aa).

The protein belongs to the Fe(2+)-trafficking protein family.

Its function is as follows. Could be a mediator in iron transactions between iron acquisition and iron-requiring processes, such as synthesis and/or repair of Fe-S clusters in biosynthetic enzymes. The protein is Probable Fe(2+)-trafficking protein of Alcanivorax borkumensis (strain ATCC 700651 / DSM 11573 / NCIMB 13689 / SK2).